Consider the following 634-residue polypeptide: DNA-directed RNA polymerase subunit gamma (634 aa).

Cys74, Cys76, Cys89, and Cys92 together coordinate Zn(2+). Mg(2+) contacts are provided by Asp471, Asp473, and Asp475.

The protein belongs to the RNA polymerase beta' chain family. RpoC1 subfamily. In cyanobacteria the RNAP catalytic core is composed of 2 alpha, 1 beta, 1 beta', 1 gamma and 1 omega subunit. When a sigma factor is associated with the core the holoenzyme is formed, which can initiate transcription. Mg(2+) serves as cofactor. Requires Zn(2+) as cofactor.

The catalysed reaction is RNA(n) + a ribonucleoside 5'-triphosphate = RNA(n+1) + diphosphate. In terms of biological role, DNA-dependent RNA polymerase catalyzes the transcription of DNA into RNA using the four ribonucleoside triphosphates as substrates. In Prochlorococcus marinus (strain MIT 9313), this protein is DNA-directed RNA polymerase subunit gamma.